Reading from the N-terminus, the 161-residue chain is Myosin regulatory light chain A, smooth adductor muscle (161 aa).

Ala-1 carries the blocked amino end (Ala) modification. EF-hand domains follow at residues 20–55 (KLMQ…LGRT) and 89–124 (DTEE…MGDN). Residues Asp-33, Asn-35, Asp-37, and Asp-44 each contribute to the Ca(2+) site.

In terms of biological role, in molluscan muscle, calcium regulation is associated with myosin rather than with actin. Muscle myosin contains two types of light chains: the catalytic light chain, essential for ATPase activity, and the regulatory light chain, a calcium-binding protein responsible for Ca(2+) dependent binding and Ca(2+) dependent Mg-ATPase activity. The sequence is that of Myosin regulatory light chain A, smooth adductor muscle from Mizuhopecten yessoensis (Japanese scallop).